The following is a 67-amino-acid chain: UPF0337 protein SP_1805 (67 aa).

Residues 1-30 form a disordered region; it reads MSVEEKLNQAKGSIKEGVGKAIGDEKMEKE.

Belongs to the UPF0337 (CsbD) family.

The chain is UPF0337 protein SP_1805 from Streptococcus pneumoniae serotype 4 (strain ATCC BAA-334 / TIGR4).